Reading from the N-terminus, the 506-residue chain is AMP phosphorylase (506 aa).

Residues Gly-168, 194–199 (SRAITG), and Thr-203 each bind AMP. Asp-256 serves as the catalytic Proton donor. 2 residues coordinate AMP: Ser-264 and Lys-288.

The protein belongs to the thymidine/pyrimidine-nucleoside phosphorylase family. Type 2 subfamily.

It carries out the reaction AMP + phosphate = alpha-D-ribose 1,5-bisphosphate + adenine. The catalysed reaction is CMP + phosphate = cytosine + alpha-D-ribose 1,5-bisphosphate. The enzyme catalyses UMP + phosphate = alpha-D-ribose 1,5-bisphosphate + uracil. Functionally, catalyzes the conversion of AMP and phosphate to adenine and ribose 1,5-bisphosphate (R15P). Exhibits phosphorylase activity toward CMP and UMP in addition to AMP. Functions in an archaeal AMP degradation pathway, together with R15P isomerase and RubisCO. In Methanococcoides burtonii (strain DSM 6242 / NBRC 107633 / OCM 468 / ACE-M), this protein is AMP phosphorylase.